Reading from the N-terminus, the 75-residue chain is UPF0154 protein MYPE400 (75 aa).

The helical transmembrane segment at 5–27 threads the bilayer; the sequence is IGLCLGLGIPISLIIGAVIGYYF.

It belongs to the UPF0154 family.

It is found in the membrane. This Malacoplasma penetrans (strain HF-2) (Mycoplasma penetrans) protein is UPF0154 protein MYPE400.